Reading from the N-terminus, the 118-residue chain is Transcription factor PAR2 (118 aa).

Positions 1–59 are disordered; that stretch reads MEKTLATSHTKRSSPPSPSSAVNTSSTGFNRRTRQRLSDATASVSETDVEDEDEDEEGV. Residues 19 to 30 are compositionally biased toward polar residues; it reads SSAVNTSSTGFN. Residues 43–92 enclose the bHLH domain; that stretch reads SVSETDVEDEDEDEEGVEEKIEALQTIVPGGTELGVDALFEETASYILAL. Residues 47–59 show a composition bias toward acidic residues; it reads TDVEDEDEDEEGV.

This sequence belongs to the bHLH protein family. As to quaternary structure, homodimer.

The protein resides in the nucleus. Atypical bHLH transcription factor that acts as a negative regulator of a variety of shade avoidance syndrome (SAS) responses, including seedling elongation and photosynthetic pigment accumulation. Acts as a direct transcriptional repressor of two auxin-responsive genes, SAUR15 and SAUR68. May function in integrating shade and hormone transcriptional networks in response to light and auxin changes. In Arabidopsis thaliana (Mouse-ear cress), this protein is Transcription factor PAR2 (PAR2).